Reading from the N-terminus, the 567-residue chain is Geranylgeranyl transferase type-2 subunit alpha (567 aa).

PFTA repeat units follow at residues 44 to 78 (LDES…QLET), 88 to 122 (LVKA…RLPE), 124 to 158 (NWTR…QAAV), 159 to 193 (PPAE…QLHP), 207 to 241 (VLLK…RADP), and 363 to 397 (VLQS…ALDP). The residue at position 98 (Ser-98) is a Phosphoserine. LRR repeat units follow at residues 442–463 (EVRV…EQLL), 464–486 (LVTH…AALR), 487–508 (CLEV…TNLP), 509–530 (RLQE…QPLA), and 534–555 (RLVL…LEQL).

Belongs to the protein prenyltransferase subunit alpha family. Heterotrimer composed of RABGGTA, RABGGTB and CHM; within this trimer, RABGGTA and RABGGTB form the catalytic component B, while CHM (component A) mediates peptide substrate binding. The Rab GGTase dimer (RGGT) interacts with CHM (component A) prior to Rab protein binding; the association is stabilized by geranylgeranyl pyrophosphate (GGpp). The CHM:RGGT:Rab complex is destabilized by GGpp. Interacts with non-phosphorylated form of RAB8A; phosphorylation of RAB8A at 'Thr-72' disrupts this interaction.

It carries out the reaction geranylgeranyl diphosphate + L-cysteinyl-[protein] = S-geranylgeranyl-L-cysteinyl-[protein] + diphosphate. With respect to regulation, the enzymatic reaction requires the aid of a Rab escort protein (also called component A), such as CHM. Its function is as follows. Catalyzes the transfer of a geranylgeranyl moiety from geranylgeranyl diphosphate to both cysteines of Rab proteins with the C-terminal sequence -XXCC, -XCXC and -CCXX, such as RAB1A, RAB3A, RAB5A and RAB7A. The protein is Geranylgeranyl transferase type-2 subunit alpha (RABGGTA) of Homo sapiens (Human).